Reading from the N-terminus, the 701-residue chain is ABC transporter G family member 23 (701 aa).

The 231-residue stretch at 7–237 folds into the ABC transporter domain; the sequence is INLNNVSRSY…YECSLLEDVY (231 aa). 39 to 46 contacts ATP; the sequence is GSSGSGKT. 6 helical membrane passes run 335-355, 493-513, 541-561, 574-596, 608-628, and 665-685; these read FPLV…FLAI, FLAP…FLSI, HILA…LIAV, LIYL…ISLI, LAIF…EAII, and LIII…STPI. Positions 459–686 constitute an ABC transmembrane type-2 domain; the sequence is FQKAFNKIAN…SLIVISTPIG (228 aa).

This sequence belongs to the ABC transporter superfamily. ABCG family.

It is found in the membrane. The chain is ABC transporter G family member 23 (abcG23) from Dictyostelium discoideum (Social amoeba).